We begin with the raw amino-acid sequence, 4218 residues long: Protein Obscurin (4218 aa).

Residues 3–71 (AVADIVFVSR…PIDILEFNPT (69 aa)) form the SH3 domain. In terms of domain architecture, DH spans 86–264 (RKLTILRELV…LSVPSRAYDN (179 aa)). A coiled-coil region spans residues 439 to 466 (SKETKERLQHEQQELLKLEQEAIELYKK). Disordered regions lie at residues 465–592 (KKQQ…SHSK), 684–703 (SLRDGDTAPAGGSPGRQQGY), 728–750 (SGANQHLQQSGPPPPPIPPNFTR), and 923–1010 (RYET…EDRP). Composition is skewed to low complexity over residues 466–490 (KQQSSKSVSSKTESVEITSSQVKSS) and 505–517 (AQVKEVTPVKVVS). A compositionally biased stretch (basic and acidic residues) spans 578–592 (KEVRKEVPPSASHSK). The segment covering 923–935 (RYETKTRDYDRGT) has biased composition (basic and acidic residues). The span at 936–948 (SYDSTVERSQYGI) shows a compositional bias: polar residues. Composition is skewed to basic and acidic residues over residues 950–962 (SRRDRSSVDKVEA) and 972–986 (TESRAASRAESRAES). Residues 987-996 (RASYSVAESR) show a composition bias toward low complexity. Ig-like C2-type domains follow at residues 1017–1103 (PVVV…TTVS), 1152–1298 (PRVK…AELS), 1313–1400 (PTLV…SSIN), 1504–1594 (PVIV…TQLL), 1599–1689 (PEFT…CVVT), 1694–1785 (PKVK…CKVA), 1815–1906 (PEIV…LSLS), 2018–2107 (PEIS…FNLA), 2113–2214 (PTFI…FKLA), 2220–2305 (PSFV…EKVA), 2318–2409 (PKFL…VEIV), 2415–2505 (PVFV…AKLY), 2519–2609 (PQFV…ANVR), 2614–2698 (PPVF…KDIT), and 2716–2792 (PPVF…SCRI). A disulfide bond links Cys-1199 and Cys-1282. An intrachain disulfide couples Cys-2739 to Cys-2790. The Fibronectin type-III 1 domain occupies 2832 to 2933 (APPPLSEGPI…TYRQKLVPDP (102 aa)). The Protein kinase 1 domain maps to 3186–3440 (YDIGDELGRG…VKTALKHPWF (255 aa)). Gly-3198, Lys-3215, Glu-3260, Ala-3262, Glu-3266, Lys-3310, and Asp-3326 together coordinate ATP. Positions 3654–3738 (PFFREKPQTI…ARNKVGQTVA (85 aa)) constitute an Ig-like C2-type 16 domain. Residues 3750 to 3843 (APDSPEISAN…IPVSASTVGG (94 aa)) form the Fibronectin type-III 2 domain. Residues 3897–4151 (YSFISEIARG…TEDCLEHRWL (255 aa)) form the Protein kinase 2 domain.

The protein belongs to the protein kinase superfamily. CAMK Ser/Thr protein kinase family. In terms of assembly, interacts with myosin. May interact (via protein kinase domain 1) with ball. May interact (via protein kinase domain 1 or 2) with mask. May interact (via protein kinase domain 2) with Tm1/tropomyosin-1. As to expression, expressed in the thoracic muscles including the indirect flight muscles (IFM) (at protein level).

It localises to the cytoplasm. Its subcellular location is the myofibril. It is found in the sarcomere. The protein localises to the m line. Its function is as follows. Structural component of the muscle M line which is involved in assembly and organization of sarcomere. Required for the development and organization of indirect flight muscle sarcomeres by regulating the formation of M line and H zone and the correct assembly of thick and thin filaments in the sarcomere. Lacks serine/threonine-protein kinase activity. This Drosophila melanogaster (Fruit fly) protein is Protein Obscurin.